Consider the following 411-residue polypeptide: Na(+)-translocating NADH-quinone reductase subunit F (411 aa).

The helical transmembrane segment at 6–26 threads the bilayer; the sequence is AIGGVAMFTLIIMGLVAIILA. The 2Fe-2S ferredoxin-type domain maps to 35–129; the sequence is GDVTIHINDN…DMKIEIDPEF (95 aa). Residues cysteine 72, cysteine 78, cysteine 81, and cysteine 113 each coordinate [2Fe-2S] cluster. An FAD-binding FR-type domain is found at 132–273; the sequence is VQKWECEVIS…SGPYGEFFAK (142 aa).

It belongs to the NqrF family. As to quaternary structure, composed of six subunits; NqrA, NqrB, NqrC, NqrD, NqrE and NqrF. Requires [2Fe-2S] cluster as cofactor. It depends on FAD as a cofactor.

The protein resides in the cell inner membrane. The enzyme catalyses a ubiquinone + n Na(+)(in) + NADH + H(+) = a ubiquinol + n Na(+)(out) + NAD(+). Its function is as follows. NQR complex catalyzes the reduction of ubiquinone-1 to ubiquinol by two successive reactions, coupled with the transport of Na(+) ions from the cytoplasm to the periplasm. The first step is catalyzed by NqrF, which accepts electrons from NADH and reduces ubiquinone-1 to ubisemiquinone by a one-electron transfer pathway. In Psychrobacter cryohalolentis (strain ATCC BAA-1226 / DSM 17306 / VKM B-2378 / K5), this protein is Na(+)-translocating NADH-quinone reductase subunit F.